The primary structure comprises 280 residues: MFRKVLFGRIAGKRRQDMATAGQYAENRAEDSAADHRSGDPAKIFLAEPEVHHPLDADFAIALVLEIAEDLGDAEHANRDGDEIDAFGKFHLSEGEPFLAGIDVLPDRAEKQAHDDHPERLQNRSVRQRNGDKKTEHDQCEIFRCSELQRHRGERRSGNCQQQGRHATGEERAECGRRQRLSGSALAGHLVAIDRRHGRRTLSWQVDQNGRGRAAILGTIIDARQHDQRGDRRKGEGDRQKHGDRRGRPDARKNADQRPQQDADEAPDDVDRSKSCLEAE.

Basic and acidic residues-rich tracts occupy residues 110–122, 167–177, 223–261, and 269–280; these read EKQAHDDHPERLQ, ATGEERAECGR, ARQHDQRGDRRKGEGDRQKHGDRRGRPDARKNADQRPQQ, and DVDRSKSCLEAE. 3 disordered regions span residues 110 to 137, 151 to 177, and 219 to 280; these read EKQAHDDHPERLQNRSVRQRNGDKKTEH, HRGERRSGNCQQQGRHATGEERAECGR, and TIID…LEAE.

This is an uncharacterized protein from Agrobacterium vitis (Rhizobium vitis).